We begin with the raw amino-acid sequence, 611 residues long: Chaperone protein HscA (611 aa).

This sequence belongs to the heat shock protein 70 family.

In terms of biological role, chaperone involved in the maturation of iron-sulfur cluster-containing proteins. Has a low intrinsic ATPase activity which is markedly stimulated by HscB. Involved in the maturation of IscU. This chain is Chaperone protein HscA, found in Buchnera aphidicola subsp. Acyrthosiphon pisum (strain 5A).